A 357-amino-acid polypeptide reads, in one-letter code: P2Y purinoceptor 8 (357 aa).

Over 1–26 (MVKNGSHLDAETLAMLQNKAISITLP) the chain is Extracellular. N4 carries an N-linked (GlcNAc...) asparagine glycan. The helical transmembrane segment at 27–47 (VVYTMVAIISIPGNFFSLWVL) threads the bilayer. The Cytoplasmic segment spans residues 48–56 (CWHIKPKTP). A helical transmembrane segment spans residues 57–77 (SVIFMINLSITDLLLACCFPF). At 78–97 (QIFYHIQRNHWIFGKTLCSL) the chain is on the extracellular side. C95 and C174 are joined by a disulfide. Residues 98-118 (VTVMFYSNMYSSILTMTCISI) form a helical membrane-spanning segment. Residues 119 to 137 (ERYMGVVYPMKLIKWRRKR) are Cytoplasmic-facing. The chain crosses the membrane as a helical span at residues 138-158 (YALGACVIMWIFLLLAFYPLE). Topologically, residues 159 to 185 (STDLTYEVKELGIITCFDVLKWEMLPN) are extracellular. Residues 186–206 (FAAWVAFLLTLFVVLFLIPFI) traverse the membrane as a helical segment. The Cytoplasmic segment spans residues 207-236 (VTVGCYIGTIRKLIQTSSRYGNKQKTRSIY). Residues 237 to 257 (LAIIVLSVFITCFAPNNFILL) form a helical membrane-spanning segment. Over 258 to 271 (AHMIVRLFYEGSLY) the chain is Extracellular. The helical transmembrane segment at 272-294 (PAYKLTLCLSCLNNCIDPFIYYF) threads the bilayer. Over 295 to 357 (ASKEFYQKFM…ICLQRQESVF (63 aa)) the chain is Cytoplasmic.

This sequence belongs to the G-protein coupled receptor 1 family.

Its subcellular location is the cell membrane. In terms of biological role, probable receptor for purines coupled to G-proteins. The protein is P2Y purinoceptor 8 (P2RY8) of Gallus gallus (Chicken).